The chain runs to 251 residues: 3-deoxy-manno-octulosonate cytidylyltransferase (251 aa).

The protein belongs to the KdsB family.

Its subcellular location is the cytoplasm. The catalysed reaction is 3-deoxy-alpha-D-manno-oct-2-ulosonate + CTP = CMP-3-deoxy-beta-D-manno-octulosonate + diphosphate. It participates in nucleotide-sugar biosynthesis; CMP-3-deoxy-D-manno-octulosonate biosynthesis; CMP-3-deoxy-D-manno-octulosonate from 3-deoxy-D-manno-octulosonate and CTP: step 1/1. It functions in the pathway bacterial outer membrane biogenesis; lipopolysaccharide biosynthesis. In terms of biological role, activates KDO (a required 8-carbon sugar) for incorporation into bacterial lipopolysaccharide in Gram-negative bacteria. The sequence is that of 3-deoxy-manno-octulosonate cytidylyltransferase from Rhizobium johnstonii (strain DSM 114642 / LMG 32736 / 3841) (Rhizobium leguminosarum bv. viciae).